Here is a 285-residue protein sequence, read N- to C-terminus: Acetyl-coenzyme A carboxylase carboxyl transferase subunit beta (285 aa).

The CoA carboxyltransferase N-terminal domain maps to 29 to 285; sequence IMTKCPKCKK…ILKIHQEVTK (257 aa). C33, C36, C52, and C55 together coordinate Zn(2+). Residues 33-55 form a C4-type zinc finger; that stretch reads CPKCKKIMYTKELAENLNVCFNC.

Belongs to the AccD/PCCB family. As to quaternary structure, acetyl-CoA carboxylase is a heterohexamer composed of biotin carboxyl carrier protein (AccB), biotin carboxylase (AccC) and two subunits each of ACCase subunit alpha (AccA) and ACCase subunit beta (AccD). Zn(2+) is required as a cofactor.

It localises to the cytoplasm. It catalyses the reaction N(6)-carboxybiotinyl-L-lysyl-[protein] + acetyl-CoA = N(6)-biotinyl-L-lysyl-[protein] + malonyl-CoA. It functions in the pathway lipid metabolism; malonyl-CoA biosynthesis; malonyl-CoA from acetyl-CoA: step 1/1. Its function is as follows. Component of the acetyl coenzyme A carboxylase (ACC) complex. Biotin carboxylase (BC) catalyzes the carboxylation of biotin on its carrier protein (BCCP) and then the CO(2) group is transferred by the transcarboxylase to acetyl-CoA to form malonyl-CoA. This chain is Acetyl-coenzyme A carboxylase carboxyl transferase subunit beta, found in Staphylococcus aureus (strain Mu3 / ATCC 700698).